A 105-amino-acid polypeptide reads, in one-letter code: Small ribosomal subunit protein uS10 (105 aa).

This sequence belongs to the universal ribosomal protein uS10 family. Part of the 30S ribosomal subunit.

Functionally, involved in the binding of tRNA to the ribosomes. The polypeptide is Small ribosomal subunit protein uS10 (Synechococcus sp. (strain JA-2-3B'a(2-13)) (Cyanobacteria bacterium Yellowstone B-Prime)).